We begin with the raw amino-acid sequence, 195 residues long: Ribonuclease HII (195 aa).

In terms of domain architecture, RNase H type-2 spans 1 to 195 (MICGIDEAGR…SWRTLRYLNT (195 aa)). Positions 6, 7, and 101 each coordinate a divalent metal cation.

The protein belongs to the RNase HII family. Requires Mn(2+) as cofactor. The cofactor is Mg(2+).

It localises to the cytoplasm. The catalysed reaction is Endonucleolytic cleavage to 5'-phosphomonoester.. Its function is as follows. Endonuclease that specifically degrades the RNA of RNA-DNA hybrids. In Pyrobaculum islandicum (strain DSM 4184 / JCM 9189 / GEO3), this protein is Ribonuclease HII.